We begin with the raw amino-acid sequence, 338 residues long: D-erythrose-4-phosphate dehydrogenase (338 aa).

Residue 11–12 coordinates NAD(+); the sequence is RI. Substrate contacts are provided by residues 153-155, arginine 199, 212-213, and arginine 235; these read SCT and TK. The Nucleophile role is filled by cysteine 154. Position 317 (asparagine 317) interacts with NAD(+).

It belongs to the glyceraldehyde-3-phosphate dehydrogenase family. Epd subfamily. Homotetramer.

The protein resides in the cytoplasm. It catalyses the reaction D-erythrose 4-phosphate + NAD(+) + H2O = 4-phospho-D-erythronate + NADH + 2 H(+). Its pathway is cofactor biosynthesis; pyridoxine 5'-phosphate biosynthesis; pyridoxine 5'-phosphate from D-erythrose 4-phosphate: step 1/5. Its function is as follows. Catalyzes the NAD-dependent conversion of D-erythrose 4-phosphate to 4-phosphoerythronate. The chain is D-erythrose-4-phosphate dehydrogenase from Shewanella piezotolerans (strain WP3 / JCM 13877).